Here is a 267-residue protein sequence, read N- to C-terminus: Small ribosomal subunit protein uS2 (267 aa).

Residues 222–267 are disordered; sequence GKALRDQDSEEEIQNKEQDEVSQEEKDDILDEAMNEEDFEIPEDKE. Residues 223–240 are compositionally biased toward basic and acidic residues; the sequence is KALRDQDSEEEIQNKEQD. Over residues 241–267 the composition is skewed to acidic residues; it reads EVSQEEKDDILDEAMNEEDFEIPEDKE.

The protein belongs to the universal ribosomal protein uS2 family.

The sequence is that of Small ribosomal subunit protein uS2 from Campylobacter hominis (strain ATCC BAA-381 / DSM 21671 / CCUG 45161 / LMG 19568 / NCTC 13146 / CH001A).